A 121-amino-acid chain; its full sequence is uncharacterized protein (121 aa).

A compositionally biased stretch (low complexity) spans 12 to 24; the sequence is EEGGASAAAPDAS. 2 disordered regions span residues 12–63 and 101–121; these read EEGG…RLEP and KKLAQQPPRLEGSQKERSPVV. Positions 26-35 are enriched in basic residues; the sequence is KSKKGARPCF. The span at 40–49 shows a compositional bias: polar residues; the sequence is QAGSCMTGRQ. Residues 112–121 are compositionally biased toward basic and acidic residues; the sequence is GSQKERSPVV.

This is an uncharacterized protein from Homo sapiens (Human).